The chain runs to 293 residues: Succinate--CoA ligase [ADP-forming] subunit alpha (293 aa).

Residues Thr-21–Gln-24, Lys-47, and Ile-99–Glu-101 each bind CoA. A substrate-binding site is contributed by Tyr-162. His-249 functions as the Tele-phosphohistidine intermediate in the catalytic mechanism.

It belongs to the succinate/malate CoA ligase alpha subunit family. In terms of assembly, heterotetramer of two alpha and two beta subunits.

The enzyme catalyses succinate + ATP + CoA = succinyl-CoA + ADP + phosphate. The catalysed reaction is GTP + succinate + CoA = succinyl-CoA + GDP + phosphate. Its pathway is carbohydrate metabolism; tricarboxylic acid cycle; succinate from succinyl-CoA (ligase route): step 1/1. In terms of biological role, succinyl-CoA synthetase functions in the citric acid cycle (TCA), coupling the hydrolysis of succinyl-CoA to the synthesis of either ATP or GTP and thus represents the only step of substrate-level phosphorylation in the TCA. The alpha subunit of the enzyme binds the substrates coenzyme A and phosphate, while succinate binding and nucleotide specificity is provided by the beta subunit. The chain is Succinate--CoA ligase [ADP-forming] subunit alpha from Methanothermobacter thermautotrophicus (strain ATCC 29096 / DSM 1053 / JCM 10044 / NBRC 100330 / Delta H) (Methanobacterium thermoautotrophicum).